The following is a 139-amino-acid chain: Protein FAM216B (139 aa).

The protein belongs to the FAM216 family.

This chain is Protein FAM216B (FAM216B), found in Homo sapiens (Human).